Consider the following 254-residue polypeptide: UPF0246 protein FTW_0267 (254 aa).

The protein belongs to the UPF0246 family.

In Francisella tularensis subsp. tularensis (strain WY96-3418), this protein is UPF0246 protein FTW_0267.